The primary structure comprises 124 residues: Aspartate 1-decarboxylase (124 aa).

S25 serves as the catalytic Schiff-base intermediate with substrate; via pyruvic acid. S25 is modified (pyruvic acid (Ser)). Substrate is bound at residue T57. Y58 serves as the catalytic Proton donor. G71–A73 is a substrate binding site.

This sequence belongs to the PanD family. As to quaternary structure, heterooctamer of four alpha and four beta subunits. Pyruvate is required as a cofactor. Post-translationally, is synthesized initially as an inactive proenzyme, which is activated by self-cleavage at a specific serine bond to produce a beta-subunit with a hydroxyl group at its C-terminus and an alpha-subunit with a pyruvoyl group at its N-terminus.

It localises to the cytoplasm. The enzyme catalyses L-aspartate + H(+) = beta-alanine + CO2. Its pathway is cofactor biosynthesis; (R)-pantothenate biosynthesis; beta-alanine from L-aspartate: step 1/1. Its function is as follows. Catalyzes the pyruvoyl-dependent decarboxylation of aspartate to produce beta-alanine. The protein is Aspartate 1-decarboxylase of Bdellovibrio bacteriovorus (strain ATCC 15356 / DSM 50701 / NCIMB 9529 / HD100).